A 314-amino-acid chain; its full sequence is O-antigen chain rhamnosyltransferase RfbN (314 aa).

The protein belongs to the glycosyltransferase 2 family.

The enzyme catalyses alpha-D-galactosyl-di-trans,octa-cis-undecaprenyl diphosphate + dTDP-beta-L-rhamnose = alpha-L-rhamnosyl-(1-&gt;3)-alpha-D-galactosyl-1-diphospho-di-trans,octa-cis-undecaprenol + dTDP + H(+). Its pathway is bacterial outer membrane biogenesis; LPS O-antigen biosynthesis. Its function is as follows. Rhamnosyltransferase involved in the biosynthesis of the repeat unit of the lipopolysaccharide (LPS) O-antigen region. Catalyzes the addition of a rhamnose to the galactosyl-undecaprenyl diphosphate intermediate. This Salmonella typhimurium (strain LT2 / SGSC1412 / ATCC 700720) protein is O-antigen chain rhamnosyltransferase RfbN.